We begin with the raw amino-acid sequence, 96 residues long: Small ribosomal subunit protein bS6 (96 aa).

It belongs to the bacterial ribosomal protein bS6 family.

In terms of biological role, binds together with bS18 to 16S ribosomal RNA. This chain is Small ribosomal subunit protein bS6, found in Corynebacterium aurimucosum (strain ATCC 700975 / DSM 44827 / CIP 107346 / CN-1) (Corynebacterium nigricans).